Consider the following 157-residue polypeptide: Mini-ribonuclease 3 (157 aa).

Aspartate 18 is a catalytic residue. Residues 126-157 form a disordered region; that stretch reads EEDEGKGKGETAKEEESITDALSPAEQSEIDC. Residues 130 to 141 show a composition bias toward basic and acidic residues; sequence GKGKGETAKEEE.

This sequence belongs to the MrnC RNase family. Homodimer. The cofactor is Mg(2+).

It is found in the cytoplasm. Functionally, involved in correct processing of both the 5' and 3' ends of 23S rRNA precursor. Processes 30S rRNA precursor transcript even in absence of ribonuclease 3 (Rnc); Rnc processes 30S rRNA into smaller rRNA precursors. This chain is Mini-ribonuclease 3, found in Desulfitobacterium hafniense (strain Y51).